The chain runs to 475 residues: Ribulose bisphosphate carboxylase large chain (475 aa).

A propeptide spanning residues 1–2 (MS) is cleaved from the precursor. P3 bears the N-acetylproline mark. An N6,N6,N6-trimethyllysine modification is found at K14. Substrate-binding residues include N123 and T173. Residue K175 is the Proton acceptor of the active site. K177 provides a ligand contact to substrate. Residues K201, D203, and E204 each coordinate Mg(2+). At K201 the chain carries N6-carboxylysine. The Proton acceptor role is filled by H294. Substrate-binding residues include R295, H327, and S379.

It belongs to the RuBisCO large chain family. Type I subfamily. As to quaternary structure, heterohexadecamer of 8 large chains and 8 small chains; disulfide-linked. The disulfide link is formed within the large subunit homodimers. Requires Mg(2+) as cofactor. Post-translationally, the disulfide bond which can form in the large chain dimeric partners within the hexadecamer appears to be associated with oxidative stress and protein turnover.

It localises to the plastid. It is found in the chloroplast. It catalyses the reaction 2 (2R)-3-phosphoglycerate + 2 H(+) = D-ribulose 1,5-bisphosphate + CO2 + H2O. The enzyme catalyses D-ribulose 1,5-bisphosphate + O2 = 2-phosphoglycolate + (2R)-3-phosphoglycerate + 2 H(+). Its function is as follows. RuBisCO catalyzes two reactions: the carboxylation of D-ribulose 1,5-bisphosphate, the primary event in carbon dioxide fixation, as well as the oxidative fragmentation of the pentose substrate in the photorespiration process. Both reactions occur simultaneously and in competition at the same active site. The sequence is that of Ribulose bisphosphate carboxylase large chain from Bouvardia ternifolia (Firecrackerbush).